Reading from the N-terminus, the 163-residue chain is NADH-quinone oxidoreductase subunit I (163 aa).

2 consecutive 4Fe-4S ferredoxin-type domains span residues 53 to 83 and 94 to 123; these read LRRY…IEAG and VRYD…EGPN. Cysteine 63, cysteine 66, cysteine 69, cysteine 73, cysteine 103, cysteine 106, cysteine 109, and cysteine 113 together coordinate [4Fe-4S] cluster.

Belongs to the complex I 23 kDa subunit family. In terms of assembly, NDH-1 is composed of 14 different subunits. Subunits NuoA, H, J, K, L, M, N constitute the membrane sector of the complex. [4Fe-4S] cluster is required as a cofactor.

The protein localises to the cell inner membrane. It carries out the reaction a quinone + NADH + 5 H(+)(in) = a quinol + NAD(+) + 4 H(+)(out). NDH-1 shuttles electrons from NADH, via FMN and iron-sulfur (Fe-S) centers, to quinones in the respiratory chain. The immediate electron acceptor for the enzyme in this species is believed to be ubiquinone. Couples the redox reaction to proton translocation (for every two electrons transferred, four hydrogen ions are translocated across the cytoplasmic membrane), and thus conserves the redox energy in a proton gradient. The polypeptide is NADH-quinone oxidoreductase subunit I (Rhizobium johnstonii (strain DSM 114642 / LMG 32736 / 3841) (Rhizobium leguminosarum bv. viciae)).